A 337-amino-acid polypeptide reads, in one-letter code: 2-oxoglutarate receptor 1 (337 aa).

Residues 1 to 37 (MIETLDSPANDSDFLDYITALENCTDEQISFKMQYLP) lie on the Extracellular side of the membrane. N-linked (GlcNAc...) asparagine glycosylation occurs at asparagine 23. A helical transmembrane segment spans residues 38–58 (VIYSIIFLVGFPGNTVAISIY). The Cytoplasmic segment spans residues 59-69 (VFKMRPWKSST). The helical transmembrane segment at 70-90 (IIMLNLALTDLLYLTSLPFLI) threads the bilayer. Over 91-116 (HYYASGENWIFGDFMCKFIRFGFHFN) the chain is Extracellular. A disulfide bridge connects residues cysteine 106 and cysteine 183. Residues 117–137 (LYSSILFLTCFSLFRYIVIIH) form a helical membrane-spanning segment. Over 138–151 (PMSCFSIQKTRWAV) the chain is Cytoplasmic. Residues 152–172 (VACAGVWVISLVAVMPMTFLI) traverse the membrane as a helical segment. Over 173–200 (TSTTRTNRSACLDLTSSDDLTTIKWYNL) the chain is Extracellular. The helical transmembrane segment at 201 to 221 (ILTATTFCLPLLIVTLCYTTI) threads the bilayer. At 222-242 (ISTLTHGPRTHSCFKQKARRL) the chain is on the cytoplasmic side. Residues 243–263 (TILLLLVFYVCFLPFHILRVI) traverse the membrane as a helical segment. Topologically, residues 264-284 (RIESRLLSISCSIESHIHEAY) are extracellular. A helical transmembrane segment spans residues 285–305 (IVSRPLAALNTFGNLLLYVVV). Topologically, residues 306–337 (SNNFQQAFCSAVRCKAIGDLEQAKKDSCSNNP) are cytoplasmic.

This sequence belongs to the G-protein coupled receptor 1 family. Highly expressed in mast cells and is found predominantly in the tissues of the respiratory tract and kidneys.

It is found in the cell membrane. Functionally, g protein-coupled receptor for dicarboxylates and amino dicarboxylates. Receptor for itaconate, a metabolite produced by myeloid lineages. In the respiratory epithelium, couples the binding of itaconate to the activation of GNA11 and downstream intracellular Ca(2+) release, leading to mucocilliary clearance of airborne pathogens. Receptor for leukotriene E4 (LTE4) produced by mast cells upon allergic inflammation. Binds with high affinity to LTE4 and elicits mucin release from pulmonary epithelium in response to airborne fungi allergens. Regulates mucin-producing goblet cell homeostasis. Receptor for alpha-ketoglutarate produced by proximal tubule renal cells upon metabolic alkalosis. In an intrarenal paracrine signaling pathway, binds alpha-ketoglutarate and drives transepithelial salt reabsorption and bicarbonate secretion by SLC26A4/pendrin-positive intercalated cells. The protein is 2-oxoglutarate receptor 1 (Oxgr1) of Rattus norvegicus (Rat).